A 470-amino-acid polypeptide reads, in one-letter code: DNA primase large subunit (470 aa).

Residues Cys-279, Cys-358, Cys-376, and Cys-414 each contribute to the [4Fe-4S] cluster site. Residues Glu-449–Lys-470 form a disordered region.

Belongs to the eukaryotic-type primase large subunit family. As to quaternary structure, heterodimer of a small subunit and a large subunit. [4Fe-4S] cluster is required as a cofactor.

Its function is as follows. DNA primase is the polymerase that synthesizes small RNA primers for the Okazaki fragments made during discontinuous DNA replication. The protein is DNA primase large subunit (prim2) of Dictyostelium discoideum (Social amoeba).